A 458-amino-acid polypeptide reads, in one-letter code: MDSVELCLPESFSLHYEEELLCRMSNKDRHIDSSCSSFIKTEPSSPASLTDSVNHHSPGGSSDASGSYSSTMNGHQNGLDSPPLYPSAPILGGSGPVRKLYDDCSSTIVEDPQTKCEYMLNSMPKRLCLVCGDIASGYHYGVASCEACKAFFKRTIQGNIEYSCPATNECEITKRRRKSCQACRFMKCLKVGMLKEGVRLDRVRGGRQKYKRRIDAENSPYLNPQLVQPAKKPYNKIVSHLLVAEPEKIYAMPDPTVPDSDIKALTTLCDLADRELVVIIGWAKHIPGFSTLSLADQMSLLQSAWMEILILGVVYRSLSFEDELVYADDYIMDEDQSKLAGLLDLNNAILQLVKKYKSMKLEKEEFVTLKAIALANSDSMHIEDVEAVQKLQDVLHEALQDYEAGQHMEDPRRAGKMLMTLPLLRQTSTKAVQHFYNIKLEGKVPMHKLFLEMLEAKV.

Residue lysine 40 forms a Glycyl lysine isopeptide (Lys-Gly) (interchain with G-Cter in SUMO) linkage. A compositionally biased stretch (polar residues) spans 42-52 (EPSSPASLTDS). The segment at 42–85 (EPSSPASLTDSVNHHSPGGSSDASGSYSSTMNGHQNGLDSPPLY) is disordered. Serine 45 carries the phosphoserine modification. Over residues 57–70 (SPGGSSDASGSYSS) the composition is skewed to low complexity. Residues 125–200 (KRLCLVCGDI…VGMLKEGVRL (76 aa)) constitute a DNA-binding region (nuclear receptor). 2 consecutive NR C4-type zinc fingers follow at residues 128–148 (CLVC…CEAC) and 164–188 (CPAT…FMKC). The region spanning 233–457 (PYNKIVSHLL…KLFLEMLEAK (225 aa)) is the NR LBD domain.

The protein belongs to the nuclear hormone receptor family. NR3 subfamily. Homodimer. Binds TLE1, PNRC1 and PNRC2. Binds GRIP1. Interacts with NRIP1, NCOA1 and NCOR2. Acetylated by PCAF/KAT2 (in vitro). Post-translationally, sumoylation on Lys-40 is enhanced by phosphorylation at Ser-45 and represses transcriptional activity. In terms of processing, phosphorylation on Ser-45 enhances sumoylation on Lys-40 thus repressing transcriptional activity. As to expression, expressed in the heart, kidney, brain, lung, bone marrow, adrenal gland, trachea, spinal cord and thyroid gland.

It is found in the nucleus. Its function is as follows. Orphan receptor that acts as a transcription activator in the absence of bound ligand. Binds specifically to an estrogen response element and activates reporter genes controlled by estrogen response elements. Induces the expression of PERM1 in the skeletal muscle. This chain is Estrogen-related receptor gamma (ESRRG), found in Homo sapiens (Human).